Consider the following 469-residue polypeptide: UDP-N-acetylmuramoylalanine--D-glutamate ligase (469 aa).

121–127 contributes to the ATP binding site; that stretch reads GTNGKST.

This sequence belongs to the MurCDEF family.

It is found in the cytoplasm. The catalysed reaction is UDP-N-acetyl-alpha-D-muramoyl-L-alanine + D-glutamate + ATP = UDP-N-acetyl-alpha-D-muramoyl-L-alanyl-D-glutamate + ADP + phosphate + H(+). The protein operates within cell wall biogenesis; peptidoglycan biosynthesis. Cell wall formation. Catalyzes the addition of glutamate to the nucleotide precursor UDP-N-acetylmuramoyl-L-alanine (UMA). The chain is UDP-N-acetylmuramoylalanine--D-glutamate ligase from Agrobacterium fabrum (strain C58 / ATCC 33970) (Agrobacterium tumefaciens (strain C58)).